We begin with the raw amino-acid sequence, 298 residues long: uncharacterized protein (298 aa).

This is an uncharacterized protein from Ictalurid herpesvirus 1 (strain Auburn) (IcHV-1).